The chain runs to 381 residues: Molybdenum import ATP-binding protein ModC (381 aa).

Positions 5-238 (SRSIQAQFRG…PALPLAASRD (234 aa)) constitute an ABC transporter domain. 37-44 (GPSGCGKS) is a binding site for ATP. A Mop domain is found at 297 to 367 (NTSILNVLPA…VKGVALAPGR (71 aa)).

It belongs to the ABC transporter superfamily. Molybdate importer (TC 3.A.1.8) family. In terms of assembly, the complex is composed of two ATP-binding proteins (ModC), two transmembrane proteins (ModB) and a solute-binding protein (ModA).

Its subcellular location is the cell inner membrane. It catalyses the reaction molybdate(out) + ATP + H2O = molybdate(in) + ADP + phosphate + H(+). Its function is as follows. Part of the ABC transporter complex ModABC involved in molybdenum import. Responsible for energy coupling to the transport system. The chain is Molybdenum import ATP-binding protein ModC from Rhodopseudomonas palustris (strain BisB18).